A 107-amino-acid polypeptide reads, in one-letter code: Nucleoid-associated protein Atu0095 (107 aa).

The segment at 81-107 is disordered; sequence KGEAQAQEKMADLTAGLPLPPGMKLPF. The segment covering 98–107 has biased composition (pro residues); the sequence is PLPPGMKLPF.

The protein belongs to the YbaB/EbfC family. As to quaternary structure, homodimer.

The protein resides in the cytoplasm. It is found in the nucleoid. In terms of biological role, binds to DNA and alters its conformation. May be involved in regulation of gene expression, nucleoid organization and DNA protection. This chain is Nucleoid-associated protein Atu0095, found in Agrobacterium fabrum (strain C58 / ATCC 33970) (Agrobacterium tumefaciens (strain C58)).